The sequence spans 370 residues: MRGARAVIDLRAIGYNYNLIRELLDEKNPDAHILCILKANAYGHGAVEVAQFLAKYCSAEGFGVASIEEALELRLSGIQNRILLLEGFFTDEDELSLIDKYNFSITIHCEEQLKSFMNYPFKKPVEVHLKLDSGMNRLGFTPAEYADKYRLLKNHKNVSGIVKATHFAFADIPEKSEYTLKQWRIFEKAAGCLPDPLSAGGGVIVVGWLNTIHMDWLRTGSMLYGLDPYDLDAKAPELPKPLIPAMKLMSTIVCVKHVEKDQPIGYGGAYVTTRDSLIGVVAIGYGDGFPQVRNGCPVIINGKRVPTVGKVCMDMLAIDVTDVPDVKRGDDVVLWGNPELTIEEVSTFSNENPFEIITGLTRRVPLQYTF.

The Proton acceptor; specific for D-alanine role is filled by K38. N6-(pyridoxal phosphate)lysine is present on K38. Catalysis depends on Y266, which acts as the Proton acceptor; specific for L-alanine.

It belongs to the alanine racemase family. Requires pyridoxal 5'-phosphate as cofactor.

The catalysed reaction is L-alanine = D-alanine. The chain is Putative alanine racemase 2 (alr2) from Schizosaccharomyces pombe (strain 972 / ATCC 24843) (Fission yeast).